The following is a 472-amino-acid chain: 4-O-methyl-glucuronoyl methylesterase 1 (472 aa).

Residues 1-20 (MKSAAYLAALAAVLPAYVNA) form the signal peptide. Positions 21 to 56 (QAQEWGQCGGIGWTGATTCVSGTVCTVLNPYYSQCL) constitute a CBM1 domain. The segment at 62-97 (TAPPPPPPPPTSVSSSSSSSTSSAPPSGPSGTSPTC) is disordered. Positions 63–72 (APPPPPPPPT) are enriched in pro residues. Over residues 73–96 (SVSSSSSSSTSSAPPSGPSGTSPT) the composition is skewed to low complexity. 3 disulfide bridges follow: Cys-97–Cys-131, Cys-283–Cys-419, and Cys-315–Cys-391. Positions 282-287 (GCSRDG) match the GXSYXG catalytic site motif motif. The active-site Nucleophile is the Ser-284. Substrate is bound by residues Lys-288, Gln-330, Glu-338, and Trp-382. His-418 functions as the Proton donor/acceptor in the catalytic mechanism. Asn-465 is a glycosylation site (N-linked (GlcNAc...) asparagine).

Belongs to the carbohydrate esterase 15 (CE15) family.

It is found in the secreted. The enzyme catalyses a 4-O-methyl-alpha-D-glucuronosyl ester derivative + H2O = 4-O-methyl-alpha-D-glucuronate derivative + an alcohol + H(+). Functionally, glucuronoyl esterase which may play a significant role in biomass degradation, as it is considered to disconnect hemicellulose from lignin through the hydrolysis of the ester bond between 4-O-methyl-D-glucuronic acid residues of glucuronoxylans and aromatic alcohols of lignin. Can hydrolyze benzyl glucuronic acid (BnGlcA), allyl glucuronic acid (allylGlcA) and to a lower degree methyl glucuronic acid (MeGlcA) in vitro. This Phanerochaete chrysosporium (strain RP-78 / ATCC MYA-4764 / FGSC 9002) (White-rot fungus) protein is 4-O-methyl-glucuronoyl methylesterase 1.